We begin with the raw amino-acid sequence, 333 residues long: tRNA uridine(34) hydroxylase (333 aa).

In terms of domain architecture, Rhodanese spans 123 to 217 (SDPEVVLVDT…YLEEVNKAES (95 aa)). Cys-177 functions as the Cysteine persulfide intermediate in the catalytic mechanism. The span at 313-327 (QKKEALRKQSAEKNK) shows a compositional bias: basic and acidic residues. The interval 313–333 (QKKEALRKQSAEKNKAKQANA) is disordered.

Belongs to the TrhO family.

The enzyme catalyses uridine(34) in tRNA + AH2 + O2 = 5-hydroxyuridine(34) in tRNA + A + H2O. Functionally, catalyzes oxygen-dependent 5-hydroxyuridine (ho5U) modification at position 34 in tRNAs. The sequence is that of tRNA uridine(34) hydroxylase from Shewanella oneidensis (strain ATCC 700550 / JCM 31522 / CIP 106686 / LMG 19005 / NCIMB 14063 / MR-1).